Consider the following 149-residue polypeptide: MQEHAKILLLPHGKDLEIPRYASKGSSGLDLRAAIEGSMTLKPGMFELVPTGICIELPEGLEAQIRPRSGLAAKFGITVLNSPGTVDQDYRGEIKVCLVNLSKNEFTINRGDRIAQMVIAKVEQILLVEAEEIGETERASGSFGSTGTE.

Substrate-binding positions include 68–70 (RSG), Asn81, 85–87 (TVD), and Lys95.

This sequence belongs to the dUTPase family. Requires Mg(2+) as cofactor.

It carries out the reaction dUTP + H2O = dUMP + diphosphate + H(+). The protein operates within pyrimidine metabolism; dUMP biosynthesis; dUMP from dCTP (dUTP route): step 2/2. In terms of biological role, this enzyme is involved in nucleotide metabolism: it produces dUMP, the immediate precursor of thymidine nucleotides and it decreases the intracellular concentration of dUTP so that uracil cannot be incorporated into DNA. This chain is Deoxyuridine 5'-triphosphate nucleotidohydrolase, found in Neorickettsia sennetsu (strain ATCC VR-367 / Miyayama) (Ehrlichia sennetsu).